The following is a 201-amino-acid chain: Recombination protein RecR (201 aa).

The C4-type zinc-finger motif lies at 60–75 (CSCCGNVDTIDPCTVC). In terms of domain architecture, Toprim spans 83–178 (AVIIVVEDVA…RITRLAHGVP (96 aa)).

This sequence belongs to the RecR family.

In terms of biological role, may play a role in DNA repair. It seems to be involved in an RecBC-independent recombinational process of DNA repair. It may act with RecF and RecO. This Sinorhizobium medicae (strain WSM419) (Ensifer medicae) protein is Recombination protein RecR.